A 118-amino-acid polypeptide reads, in one-letter code: Large ribosomal subunit protein bL19 (118 aa).

It belongs to the bacterial ribosomal protein bL19 family.

This protein is located at the 30S-50S ribosomal subunit interface and may play a role in the structure and function of the aminoacyl-tRNA binding site. The sequence is that of Large ribosomal subunit protein bL19 from Teredinibacter turnerae (strain ATCC 39867 / T7901).